A 189-amino-acid polypeptide reads, in one-letter code: Mitochondrial FAD-linked sulfhydryl oxidase ERV1 (189 aa).

The 101-residue stretch at 83 to 183 folds into the ERV/ALR sulfhydryl oxidase domain; the sequence is DPPDVEQLGR…FDCNFWEKRW (101 aa). Residues 88-95, His99, and Tyr128 each bind FAD; that span reads EQLGRSSW. 2 disulfide bridges follow: Cys130–Cys133 and Cys159–Cys176. Residues 159–171 and 182–183 contribute to the FAD site; these read CEAH…KLRK and RW.

In terms of assembly, homodimer. Interacts with MIA40, forming transient intermolecular disulfide bridges. FAD serves as cofactor.

It localises to the mitochondrion intermembrane space. It catalyses the reaction 2 R'C(R)SH + O2 = R'C(R)S-S(R)CR' + H2O2. In terms of biological role, FAD-dependent sulfhydryl oxidase that catalyzes disulfide bond formation. Required for the import and folding of small cysteine-containing proteins in the mitochondrial intermembrane space (IMS). Forms a redox cycle with MIA40 that involves a disulfide relay system. Important for maintaining the cysteine residues in MIA40 in an oxidized state. Reduced ERV1 is reoxidized by cytochrome c. Required for the maturation of cytoplasmic, but not of mitochondrial Fe/S proteins. The chain is Mitochondrial FAD-linked sulfhydryl oxidase ERV1 (ERV1) from Saccharomyces cerevisiae (strain ATCC 204508 / S288c) (Baker's yeast).